The sequence spans 176 residues: Baseplate protein I (176 aa).

The protein belongs to the P2likevirus gpI protein family.

It localises to the virion. In terms of biological role, baseplate protein that may be part of the wedges of the baseplate. Plays a role in tail assembly. In Escherichia phage P2 (Bacteriophage P2), this protein is Baseplate protein I (I).